The following is a 37-amino-acid chain: Large ribosomal subunit protein bL36 (37 aa).

It belongs to the bacterial ribosomal protein bL36 family.

This Paracidovorax citrulli (strain AAC00-1) (Acidovorax citrulli) protein is Large ribosomal subunit protein bL36.